A 281-amino-acid chain; its full sequence is ATP synthase gamma chain (281 aa).

It belongs to the ATPase gamma chain family. In terms of assembly, F-type ATPases have 2 components, CF(1) - the catalytic core - and CF(0) - the membrane proton channel. CF(1) has five subunits: alpha(3), beta(3), gamma(1), delta(1), epsilon(1). CF(0) has three main subunits: a, b and c.

The protein localises to the cell inner membrane. Its function is as follows. Produces ATP from ADP in the presence of a proton gradient across the membrane. The gamma chain is believed to be important in regulating ATPase activity and the flow of protons through the CF(0) complex. In Ehrlichia chaffeensis (strain ATCC CRL-10679 / Arkansas), this protein is ATP synthase gamma chain.